Consider the following 113-residue polypeptide: Hydrogenase maturation factor HybF (113 aa).

Ni(2+) contacts are provided by His-2 and Glu-3. Zn(2+) contacts are provided by Cys-73, Cys-76, Cys-89, and Cys-92.

Belongs to the HypA/HybF family. HybF subfamily.

Its function is as follows. Involved in the maturation of [NiFe] hydrogenases. Required for nickel insertion into the metal center of the hydrogenase. The chain is Hydrogenase maturation factor HybF from Salmonella typhi.